We begin with the raw amino-acid sequence, 352 residues long: Histidine biosynthesis bifunctional protein HisB (352 aa).

The interval 1–164 is histidinol-phosphatase; that stretch reads MSQKILFIDR…EIENEILSSF (164 aa). Catalysis depends on Asp-9, which acts as the Nucleophile. Mg(2+)-binding residues include Asp-9 and Asp-11. Catalysis depends on Asp-11, which acts as the Proton donor. The Zn(2+) site is built by Cys-93, His-95, Cys-101, and Cys-103. Asp-130 contacts Mg(2+). The interval 165-352 is imidazoleglycerol-phosphate dehydratase; it reads RSASYQRTTK…ENLASSKGVI (188 aa).

The protein in the N-terminal section; belongs to the histidinol-phosphatase family. In the C-terminal section; belongs to the imidazoleglycerol-phosphate dehydratase family. Mg(2+) is required as a cofactor. Zn(2+) serves as cofactor.

It is found in the cytoplasm. It carries out the reaction D-erythro-1-(imidazol-4-yl)glycerol 3-phosphate = 3-(imidazol-4-yl)-2-oxopropyl phosphate + H2O. The catalysed reaction is L-histidinol phosphate + H2O = L-histidinol + phosphate. It functions in the pathway amino-acid biosynthesis; L-histidine biosynthesis; L-histidine from 5-phospho-alpha-D-ribose 1-diphosphate: step 6/9. Its pathway is amino-acid biosynthesis; L-histidine biosynthesis; L-histidine from 5-phospho-alpha-D-ribose 1-diphosphate: step 8/9. The chain is Histidine biosynthesis bifunctional protein HisB from Campylobacter jejuni subsp. jejuni serotype O:2 (strain ATCC 700819 / NCTC 11168).